The primary structure comprises 477 residues: Glycogen synthase (477 aa).

Lysine 15 is an ADP-alpha-D-glucose binding site.

Belongs to the glycosyltransferase 1 family. Bacterial/plant glycogen synthase subfamily.

The enzyme catalyses [(1-&gt;4)-alpha-D-glucosyl](n) + ADP-alpha-D-glucose = [(1-&gt;4)-alpha-D-glucosyl](n+1) + ADP + H(+). Its pathway is glycan biosynthesis; glycogen biosynthesis. In terms of biological role, synthesizes alpha-1,4-glucan chains using ADP-glucose. The sequence is that of Glycogen synthase from Shigella flexneri serotype 5b (strain 8401).